Here is a 1133-residue protein sequence, read N- to C-terminus: ATP-dependent DNA helicase homolog MER3 (1133 aa).

Residues 34–229 (PLCFHSDINM…WLKVPTAGIK (196 aa)) enclose the Helicase ATP-binding domain. Position 47–54 (47–54 (APTGSGKT)) interacts with ATP. The DEVH box motif lies at 165 to 168 (DEVH). In terms of domain architecture, Helicase C-terminal spans 263–460 (YIYDILMQYS…CLIEHLTAEI (198 aa)). The 312-residue stretch at 536–847 (EPGRLMTKYY…FEEYIGIDLH (312 aa)) folds into the SEC63 domain. Positions 878–919 (ACIADDDNPVTSGPSNRKDKKDDMPSFKLIDDDSEEEKEPYV) are disordered. Over residues 893–908 (NRKDKKDDMPSFKLID) the composition is skewed to basic and acidic residues. The segment covering 909–919 (DDSEEEKEPYV) has biased composition (acidic residues).

Belongs to the helicase family. SKI2 subfamily. Expressed in meiocytes during meiosis.

Its subcellular location is the nucleus. The catalysed reaction is Couples ATP hydrolysis with the unwinding of duplex DNA by translocating in the 3'-5' direction.. The enzyme catalyses ATP + H2O = ADP + phosphate + H(+). Its function is as follows. DNA helicase required for crossover formation, complete synapsis of homologous chromosomes and bivalent formation during meiosis. Is specific to recombination events resulting in interference-sensitive crossovers (class I meiotic crossover). The polypeptide is ATP-dependent DNA helicase homolog MER3 (Arabidopsis thaliana (Mouse-ear cress)).